The chain runs to 355 residues: Methylthioribose-1-phosphate isomerase (355 aa).

Residues 50 to 52 (RGA), Arg-93, and Gln-198 contribute to the substrate site. The active-site Proton donor is the Asp-239. 249–250 (NK) contacts substrate.

Belongs to the eIF-2B alpha/beta/delta subunits family. MtnA subfamily. In terms of assembly, homodimer.

The enzyme catalyses 5-(methylsulfanyl)-alpha-D-ribose 1-phosphate = 5-(methylsulfanyl)-D-ribulose 1-phosphate. It participates in amino-acid biosynthesis; L-methionine biosynthesis via salvage pathway; L-methionine from S-methyl-5-thio-alpha-D-ribose 1-phosphate: step 1/6. Catalyzes the interconversion of methylthioribose-1-phosphate (MTR-1-P) into methylthioribulose-1-phosphate (MTRu-1-P). This is Methylthioribose-1-phosphate isomerase from Geobacillus kaustophilus (strain HTA426).